Here is a 557-residue protein sequence, read N- to C-terminus: Beta-amylase 2, chloroplastic (557 aa).

A chloroplast-targeting transit peptide spans 1–38 (MMSLNLAHQTGAAAAVAPAAPRTAVVAAAAGTVSAPAV). Positions 135, 175, and 183 each coordinate substrate. The Proton donor role is filled by glutamate 267. Substrate is bound by residues lysine 380, histidine 385, and threonine 427. The active-site Proton acceptor is the glutamate 465. Residues 466 to 467 (NA) and arginine 499 contribute to the substrate site.

The protein belongs to the glycosyl hydrolase 14 family.

The protein resides in the plastid. The protein localises to the chloroplast. It catalyses the reaction Hydrolysis of (1-&gt;4)-alpha-D-glucosidic linkages in polysaccharides so as to remove successive maltose units from the non-reducing ends of the chains.. Functionally, possesses beta-amylase activity in vitro. May be involved in cold resistance by mediating the accumulation of maltose upon freezing stress, thus contributing to the protection of membranes. The protein is Beta-amylase 2, chloroplastic of Oryza sativa subsp. japonica (Rice).